A 269-amino-acid chain; its full sequence is uncharacterized protein (269 aa).

This is an uncharacterized protein from Acanthamoeba polyphaga (Amoeba).